The sequence spans 486 residues: Probable glucan endo-1,3-beta-glucosidase eglC (486 aa).

Positions 1–18 (MQLTQLLALALSLATSEA) are cleaved as a signal peptide. Residue asparagine 84 is glycosylated (N-linked (GlcNAc...) asparagine). Residue glutamate 128 is the Proton donor of the active site. N-linked (GlcNAc...) asparagine glycosylation is present at asparagine 183. Glutamate 239 serves as the catalytic Nucleophile. N-linked (GlcNAc...) asparagine glycans are attached at residues asparagine 315, asparagine 386, asparagine 396, and asparagine 404. The segment at 330–458 (AAAGGVAGGS…SSGAASPSST (129 aa)) is disordered. 2 stretches are compositionally biased toward low complexity: residues 341–404 (GSAS…HGSN) and 413–424 (SVSNVSPSKSSS). Polar residues predominate over residues 430-442 (AATSMGASPSSVG). Low complexity predominate over residues 445–458 (GPSKSSGAASPSST). A lipid anchor (GPI-anchor amidated glycine) is attached at glycine 463. The propeptide at 464–486 (AATSVSAPVVHVVLLALMMVIAA) is removed in mature form.

This sequence belongs to the glycosyl hydrolase 17 family. Post-translationally, the GPI-anchor is attached to the protein in the endoplasmic reticulum and serves to target the protein to the cell surface. There, the glucosamine-inositol phospholipid moiety is cleaved off and the GPI-modified mannoprotein is covalently attached via its lipidless GPI glycan remnant to the 1,6-beta-glucan of the outer cell wall layer.

Its subcellular location is the cell membrane. It is found in the secreted. The protein localises to the cell wall. The enzyme catalyses Hydrolysis of (1-&gt;3)-beta-D-glucosidic linkages in (1-&gt;3)-beta-D-glucans.. Functionally, glucanases play a role in cell expansion during growth, in cell-cell fusion during mating, and in spore release during sporulation. This enzyme may be involved in beta-glucan degradation and also function biosynthetically as a transglycosylase. The protein is Probable glucan endo-1,3-beta-glucosidase eglC (eglC) of Aspergillus terreus (strain NIH 2624 / FGSC A1156).